We begin with the raw amino-acid sequence, 298 residues long: Ethanolamine ammonia-lyase small subunit (298 aa).

Positions 15–43 are disordered; the sequence is ASMGQDVPQPVAPSTQEGAKPQRAAPTAT. Valine 210, glutamate 231, and cysteine 261 together coordinate adenosylcob(III)alamin.

This sequence belongs to the EutC family. As to quaternary structure, the basic unit is a heterodimer which dimerizes to form tetramers. The heterotetramers trimerize; 6 large subunits form a core ring with 6 small subunits projecting outwards. Adenosylcob(III)alamin serves as cofactor.

It is found in the bacterial microcompartment. It catalyses the reaction ethanolamine = acetaldehyde + NH4(+). The protein operates within amine and polyamine degradation; ethanolamine degradation. Catalyzes the deamination of various vicinal amino-alcohols to oxo compounds. Allows this organism to utilize ethanolamine as the sole source of nitrogen and carbon in the presence of external vitamin B12. This chain is Ethanolamine ammonia-lyase small subunit, found in Salmonella arizonae (strain ATCC BAA-731 / CDC346-86 / RSK2980).